A 323-amino-acid polypeptide reads, in one-letter code: Probable cell division protein WhiA (323 aa).

Residues 279-313 (TLKELGEMVSGGKISKSGINHRLRKLDEIAERLRA) constitute a DNA-binding region (H-T-H motif).

This sequence belongs to the WhiA family.

In terms of biological role, involved in cell division and chromosome segregation. This Anoxybacillus flavithermus (strain DSM 21510 / WK1) protein is Probable cell division protein WhiA.